A 122-amino-acid chain; its full sequence is Large ribosomal subunit protein uL14c (122 aa).

Belongs to the universal ribosomal protein uL14 family. As to quaternary structure, part of the 50S ribosomal subunit.

Its subcellular location is the plastid. The protein resides in the chloroplast. Binds to 23S rRNA. This chain is Large ribosomal subunit protein uL14c, found in Arabis hirsuta (Hairy rock-cress).